The following is a 397-amino-acid chain: Tryptophan synthase beta chain (397 aa).

Lys87 is modified (N6-(pyridoxal phosphate)lysine).

The protein belongs to the TrpB family. Tetramer of two alpha and two beta chains. It depends on pyridoxal 5'-phosphate as a cofactor.

It carries out the reaction (1S,2R)-1-C-(indol-3-yl)glycerol 3-phosphate + L-serine = D-glyceraldehyde 3-phosphate + L-tryptophan + H2O. Its pathway is amino-acid biosynthesis; L-tryptophan biosynthesis; L-tryptophan from chorismate: step 5/5. In terms of biological role, the beta subunit is responsible for the synthesis of L-tryptophan from indole and L-serine. The sequence is that of Tryptophan synthase beta chain from Shigella boydii serotype 18 (strain CDC 3083-94 / BS512).